The sequence spans 211 residues: Protein DEHYDRATION-INDUCED 19 homolog 7 (211 aa).

Phosphothreonine is present on Thr-113. A disordered region spans residues 163 to 194 (GDSVAQVSPKDTSKSKIQQESFSNEDQEKAKK). Residues 167-186 (AQVSPKDTSKSKIQQESFSN) show a composition bias toward polar residues.

Belongs to the Di19 family. Post-translationally, not phosphorylated in vitro by CPK3 or CPK11. As to expression, expressed in seedlings, roots, leaves, stems, flowers and siliques.

The protein localises to the nucleus. In terms of biological role, involved in both red and blue light signaling. In Arabidopsis thaliana (Mouse-ear cress), this protein is Protein DEHYDRATION-INDUCED 19 homolog 7 (DI19-7).